The sequence spans 235 residues: Glucosamine-6-phosphate deaminase (235 aa).

Aspartate 62 serves as the catalytic Proton acceptor; for enolization step. Catalysis depends on asparagine 128, which acts as the For ring-opening step. Histidine 130 functions as the Proton acceptor; for ring-opening step in the catalytic mechanism. The For ring-opening step role is filled by glutamate 135.

It belongs to the glucosamine/galactosamine-6-phosphate isomerase family. NagB subfamily.

It catalyses the reaction alpha-D-glucosamine 6-phosphate + H2O = beta-D-fructose 6-phosphate + NH4(+). It functions in the pathway amino-sugar metabolism; N-acetylneuraminate degradation; D-fructose 6-phosphate from N-acetylneuraminate: step 5/5. In terms of biological role, catalyzes the reversible isomerization-deamination of glucosamine 6-phosphate (GlcN6P) to form fructose 6-phosphate (Fru6P) and ammonium ion. This Streptococcus pneumoniae serotype 2 (strain D39 / NCTC 7466) protein is Glucosamine-6-phosphate deaminase.